The primary structure comprises 206 residues: Holliday junction branch migration complex subunit RuvA (206 aa).

Residues 1–62 (MYDYLKGLIT…EDAQVLYGFP (62 aa)) form a domain I region. The interval 63-141 (NLDQRELFRK…SLLETIELPS (79 aa)) is domain II. Positions 142–152 (TEDELPLFGVH) are flexible linker. Residues 153 to 206 (PYKHELEEAILALAALGYSEKELEKIRPLLEDNDKLETTDAYMKQALQLLLKLK) form a domain III region.

It belongs to the RuvA family. In terms of assembly, homotetramer. Forms an RuvA(8)-RuvB(12)-Holliday junction (HJ) complex. HJ DNA is sandwiched between 2 RuvA tetramers; dsDNA enters through RuvA and exits via RuvB. An RuvB hexamer assembles on each DNA strand where it exits the tetramer. Each RuvB hexamer is contacted by two RuvA subunits (via domain III) on 2 adjacent RuvB subunits; this complex drives branch migration. In the full resolvosome a probable DNA-RuvA(4)-RuvB(12)-RuvC(2) complex forms which resolves the HJ.

It is found in the cytoplasm. Its function is as follows. The RuvA-RuvB-RuvC complex processes Holliday junction (HJ) DNA during genetic recombination and DNA repair, while the RuvA-RuvB complex plays an important role in the rescue of blocked DNA replication forks via replication fork reversal (RFR). RuvA specifically binds to HJ cruciform DNA, conferring on it an open structure. The RuvB hexamer acts as an ATP-dependent pump, pulling dsDNA into and through the RuvAB complex. HJ branch migration allows RuvC to scan DNA until it finds its consensus sequence, where it cleaves and resolves the cruciform DNA. This is Holliday junction branch migration complex subunit RuvA from Lysinibacillus sphaericus (strain C3-41).